The chain runs to 70 residues: MNNRSAVRILRLPAVIQKTGMARATIYDWLNPKSPRYDATFPKKRMLGVKSVGWIEAEIDEWLSQRCKLI.

The H-T-H motif DNA-binding region spans 12-31 (LPAVIQKTGMARATIYDWLN).

Its function is as follows. Positive regulator of the expression of the slpA gene. When overexpressed, leads to suppression of the capsule overproduction and UV sensitivity phenotypes of cells mutant for the Lon ATP-dependent protease. Part of the cryptic P4-like prophage CP4-57. Overexpression of AlpA leads to excision of the CP4-57 prophage by IntA. This inactivates ssrA (the gene upstream of the prophage) that encodes tmRNA which is required to rescue stalled ribosomes in a process known as trans-translation. The sequence is that of DNA-binding transcriptional activator AlpA from Escherichia coli (strain K12).